The following is a 213-amino-acid chain: ATP synthase peripheral stalk subunit OSCP, mitochondrial (213 aa).

The N-terminal 23 residues, 1 to 23 (MAAPAASGLSRQVRSFSTSVVRP), are a transit peptide targeting the mitochondrion. Positions 5–23 (AASGLSRQVRSFSTSVVRP) match the SIFI-degron motif. N6-acetyllysine occurs at positions 54, 60, 70, and 73. Lysine 90 carries the post-translational modification N6-succinyllysine. N6-acetyllysine; alternate occurs at positions 100, 158, and 162. Residues lysine 100, lysine 158, and lysine 162 each carry the N6-succinyllysine; alternate modification. 3 positions are modified to N6-acetyllysine: lysine 172, lysine 176, and lysine 192. The residue at position 199 (lysine 199) is an N6-succinyllysine.

It belongs to the ATPase delta chain family. As to quaternary structure, component of the ATP synthase complex composed at least of ATP5F1A/subunit alpha, ATP5F1B/subunit beta, ATP5MC1/subunit c (homooctomer), MT-ATP6/subunit a, MT-ATP8/subunit 8, ATP5ME/subunit e, ATP5MF/subunit f, ATP5MG/subunit g, ATP5MK/subunit k, ATP5MJ/subunit j, ATP5F1C/subunit gamma, ATP5F1D/subunit delta, ATP5F1E/subunit epsilon, ATP5PF/subunit F6, ATP5PB/subunit b, ATP5PD/subunit d, ATP5PO/subunit OSCP. ATP synthase complex consists of a soluble F(1) head domain (subunits alpha(3) and beta(3)) - the catalytic core - and a membrane F(0) domain - the membrane proton channel (subunits c, a, 8, e, f, g, k and j). These two domains are linked by a central stalk (subunits gamma, delta, and epsilon) rotating inside the F1 region and a stationary peripheral stalk (subunits F6, b, d, and OSCP). Post-translationally, acetylation of Lys-70 and Lys-158 is observed in liver mitochondria from fasted mice but not from fed mice. In terms of processing, acetylation at Lys-162 decreases ATP production. Deacetylated by SIRT3. In response to mitochondrial stress, the precursor protein is ubiquitinated by the SIFI complex in the cytoplasm before mitochondrial import, leading to its degradation. Within the SIFI complex, UBR4 initiates ubiquitin chain that are further elongated or branched by KCMF1.

The protein localises to the mitochondrion. Its subcellular location is the mitochondrion inner membrane. Functionally, subunit OSCP, of the mitochondrial membrane ATP synthase complex (F(1)F(0) ATP synthase or Complex V) that produces ATP from ADP in the presence of a proton gradient across the membrane which is generated by electron transport complexes of the respiratory chain. ATP synthase complex consist of a soluble F(1) head domain - the catalytic core - and a membrane F(1) domain - the membrane proton channel. These two domains are linked by a central stalk rotating inside the F(1) region and a stationary peripheral stalk. During catalysis, ATP synthesis in the catalytic domain of F(1) is coupled via a rotary mechanism of the central stalk subunits to proton translocation. In vivo, can only synthesize ATP although its ATP hydrolase activity can be activated artificially in vitro. Part of the complex F(0) domain. Part of the complex F(0) domain and the peripheric stalk, which acts as a stator to hold the catalytic alpha(3)beta(3) subcomplex and subunit a/ATP6 static relative to the rotary elements. This is ATP synthase peripheral stalk subunit OSCP, mitochondrial from Mus musculus (Mouse).